We begin with the raw amino-acid sequence, 29 residues long: GIPCAESCVYIPCLTSAGCSCKSKVCYRN.

3 disulfide bridges follow: C4–C19, C8–C21, and C13–C26.

This is a cyclic peptide. Post-translationally, contains 3 disulfide bonds.

Functionally, probably participates in a plant defense mechanism. This chain is Cyclotide mra2, found in Melicytus ramiflorus (Whitey wood).